A 370-amino-acid chain; its full sequence is Aminomethyltransferase (370 aa).

Belongs to the GcvT family. In terms of assembly, the glycine cleavage system is composed of four proteins: P, T, L and H.

It carries out the reaction N(6)-[(R)-S(8)-aminomethyldihydrolipoyl]-L-lysyl-[protein] + (6S)-5,6,7,8-tetrahydrofolate = N(6)-[(R)-dihydrolipoyl]-L-lysyl-[protein] + (6R)-5,10-methylene-5,6,7,8-tetrahydrofolate + NH4(+). Its function is as follows. The glycine cleavage system catalyzes the degradation of glycine. The polypeptide is Aminomethyltransferase (Prochlorococcus marinus (strain MIT 9301)).